We begin with the raw amino-acid sequence, 346 residues long: DNA-directed RNA polymerases I and III subunit RPAC1 (346 aa).

Alanine 2 is modified (N-acetylalanine). A Phosphoserine modification is found at serine 4.

The protein belongs to the archaeal Rpo3/eukaryotic RPB3 RNA polymerase subunit family. Component of the RNA polymerase I and RNA polymerase III complexes consisting of at least 13 and 17 subunits, respectively. Pol I complex consists of a ten-subunit catalytic core composed of POLR1A/RPA1, POLR1B/RPA2, POLR1C/RPAC1, POLR1D/RPAC2, POLR1H/RPA12, POLR2E/RPABC1, POLR2F/RPABC2, POLR2H/RPABC3, POLR2K/RPABC4 and POLR2L/RPABC5; a mobile stalk subunit POLR1F/RPA43 protruding from the core and additional subunits homologous to general transcription factors POLR1E/RPA49 and POLR1G/RPA34. Part of Pol I pre-initiation complex (PIC), in which Pol I core assembles with RRN3 and promoter-bound UTBF and SL1/TIF-IB complex. Pol III complex consists of a ten-subunit catalytic core composed of POLR3A/RPC1, POLR3B/RPC2, POLR1C/RPAC1, POLR1D/RPAC2, POLR3K/RPC10, POLR2E/RPABC1, POLR2F/RPABC2, POLR2H/RPABC3, POLR2K/RPABC4 and POLR2L/RPABC5; a mobile stalk composed of two subunits POLR3H/RPC8 and CRCP/RPC9, protruding from the core and functioning primarily in transcription initiation; and additional subunits homologous to general transcription factors of the RNA polymerase II machinery, POLR3C/RPC3-POLR3F/RPC6-POLR3G/RPC7 heterotrimer required for transcription initiation and POLR3D/RPC4-POLR3E/RPC5 heterodimer involved in both transcription initiation and termination.

The protein localises to the nucleus. The protein resides in the nucleolus. It is found in the cytoplasm. Its subcellular location is the cytosol. In terms of biological role, DNA-dependent RNA polymerase catalyzes the transcription of DNA into RNA using the four ribonucleoside triphosphates as substrates. Common component of RNA polymerases I and III which synthesize ribosomal RNA precursors and short non-coding RNAs including 5S rRNA, snRNAs, tRNAs and miRNAs, respectively. POLR1C/RPAC1 is part of the polymerase core and may function as a clamp element that moves to open and close the cleft. The chain is DNA-directed RNA polymerases I and III subunit RPAC1 from Homo sapiens (Human).